The primary structure comprises 329 residues: Ribosomal protein L11 methyltransferase (329 aa).

Residues threonine 177, glycine 198, aspartate 220, and asparagine 264 each coordinate S-adenosyl-L-methionine.

Belongs to the methyltransferase superfamily. PrmA family.

Its subcellular location is the cytoplasm. The enzyme catalyses L-lysyl-[protein] + 3 S-adenosyl-L-methionine = N(6),N(6),N(6)-trimethyl-L-lysyl-[protein] + 3 S-adenosyl-L-homocysteine + 3 H(+). Functionally, methylates ribosomal protein L11. This Helicobacter pylori (strain J99 / ATCC 700824) (Campylobacter pylori J99) protein is Ribosomal protein L11 methyltransferase.